Here is a 147-residue protein sequence, read N- to C-terminus: Large ribosomal subunit protein uL16 (147 aa).

It belongs to the universal ribosomal protein uL16 family. Part of the 50S ribosomal subunit.

Functionally, binds 23S rRNA and is also seen to make contacts with the A and possibly P site tRNAs. The polypeptide is Large ribosomal subunit protein uL16 (Clostridium tetani (strain Massachusetts / E88)).